The primary structure comprises 242 residues: MKIWCAVCDKEEASVFCCADEAALCNGCDRHVHFANKLAGKHLRFSLTSPTFKDAPLCDICGERRALLFCQEDRAILCRECDIPIHQANEHTKKHNRFLLTGVKISASPSAYPRASNSNSAAAFGRAKTRPKSVSSEVPSSASNEVFTSSSSTTTSNCYYGIEENYHHVSDSGSGSGCTGSISEYLMETLPGWRVEDLLEHPSCVSYEDNIITNNNNSESYRVYDGSSQFHHQGFWDHKPFS.

The Zn(2+) site is built by cysteine 5, cysteine 8, cysteine 28, histidine 33, cysteine 58, cysteine 61, cysteine 81, and histidine 91. The B box-type 1; atypical zinc finger occupies 5–47 (CAVCDKEEASVFCCADEAALCNGCDRHVHFANKLAGKHLRFSL). The segment at 58-100 (CDICGERRALLFCQEDRAILCRECDIPIHQANEHTKKHNRFLL) adopts a B box-type 2; atypical zinc-finger fold. The disordered stretch occupies residues 112-153 (YPRASNSNSAAAFGRAKTRPKSVSSEVPSSASNEVFTSSSST). A compositionally biased stretch (low complexity) spans 133-153 (SVSSEVPSSASNEVFTSSSST).

As to quaternary structure, interacts with MED25 and COP1. COP1-mediated ubiquitination and subsequent proteasomal degradation of BBX20 occurs in the dark.

The protein localises to the nucleus. Its function is as follows. Acts as a positive regulator of seedling photomorphogenesis. Plays a negative role in brassinosteroid responses. The protein is B-box zinc finger protein 20 of Arabidopsis thaliana (Mouse-ear cress).